A 168-amino-acid chain; its full sequence is RNA pyrophosphohydrolase (168 aa).

Positions 8 to 160 (PYRPCVGLAI…KRQVYERVAR (153 aa)) constitute a Nudix hydrolase domain. A Nudix box motif is present at residues 47 to 68 (GGIDKGEEPYEAALRELYEETS).

It belongs to the Nudix hydrolase family. RppH subfamily. A divalent metal cation is required as a cofactor.

Accelerates the degradation of transcripts by removing pyrophosphate from the 5'-end of triphosphorylated RNA, leading to a more labile monophosphorylated state that can stimulate subsequent ribonuclease cleavage. In Azorhizobium caulinodans (strain ATCC 43989 / DSM 5975 / JCM 20966 / LMG 6465 / NBRC 14845 / NCIMB 13405 / ORS 571), this protein is RNA pyrophosphohydrolase.